A 142-amino-acid polypeptide reads, in one-letter code: Galactose-binding lectin (142 aa).

Residues 1–141 (TYAEVESFGV…GTDIWDLLLL (141 aa)) form the Galectin domain.

Homotetramer.

Cytotoxic activity against L.infantum promastigotes is completely inhibited by D-galactose. Inhibition activity against biofilm formation by S.aureus and S.epidermidis is inhibited by alpha-lactose. Hemagglutination activity is inhibited by alpha-lactose (MIC=100 mM), beta-lactose (MIC=100 mM), lactulose (MIC=100 mM), bovine submaxillary mucin (BSM) (MIC=32 ug/ml), fetuin (MIC=16 ug/ml), porcine stomach mucin (PSM) type 2 (MIC=8 ug/ml) and PSM type 3 (MIC=8 ug/ml). Galactose-binding lectin. Displays antibacterial and hemagglutinin activity. Inhibits the growth of L.infantum promastigotes by damaging their membrane integrity and inducing cell apoptosis via the production of reactive oxygen species (ROS). Inhibition of L.infantum promastigotes appears to increase with time (MIC=1.2 uM/ml after 24 hours, MIC=0.9 uM/ml after 48 hours and MIC=0.6 uM/ml after 72 hours). Agglutinates Gram-negative and Gram-positive bacteria including E.coli, S.aureus and S.epidermidis, and inhibits biofilm formation by S.aureus and S.epidermidis. Displays hemagglutination activity towards all types of human erythrocytes (O, A and B) and rabbit erythrocytes. This chain is Galactose-binding lectin, found in Chondrilla caribensis (Chicken liver sponge).